Consider the following 303-residue polypeptide: UDP-N-acetylenolpyruvoylglucosamine reductase (303 aa).

The FAD-binding PCMH-type domain occupies 30-195 (KTGGPADLLA…LSARFEMAKG (166 aa)). The active site involves Arg-174. The active-site Proton donor is Ser-224. Glu-294 is a catalytic residue.

Belongs to the MurB family. It depends on FAD as a cofactor.

The protein resides in the cytoplasm. It catalyses the reaction UDP-N-acetyl-alpha-D-muramate + NADP(+) = UDP-N-acetyl-3-O-(1-carboxyvinyl)-alpha-D-glucosamine + NADPH + H(+). It participates in cell wall biogenesis; peptidoglycan biosynthesis. Cell wall formation. The chain is UDP-N-acetylenolpyruvoylglucosamine reductase from Latilactobacillus sakei subsp. sakei (strain 23K) (Lactobacillus sakei subsp. sakei).